The following is a 150-amino-acid chain: Large ribosomal subunit protein bL9 (150 aa).

The protein belongs to the bacterial ribosomal protein bL9 family.

In terms of biological role, binds to the 23S rRNA. The protein is Large ribosomal subunit protein bL9 of Shewanella loihica (strain ATCC BAA-1088 / PV-4).